The sequence spans 303 residues: Putative deoxyribose-phosphate aldolase (303 aa).

Asp157 acts as the Proton donor/acceptor in catalysis. Lys220 (schiff-base intermediate with acetaldehyde) is an active-site residue. Lys256 serves as the catalytic Proton donor/acceptor.

It belongs to the DeoC/FbaB aldolase family. DeoC type 2 subfamily.

The enzyme catalyses 2-deoxy-D-ribose 5-phosphate = D-glyceraldehyde 3-phosphate + acetaldehyde. The protein operates within carbohydrate degradation; 2-deoxy-D-ribose 1-phosphate degradation; D-glyceraldehyde 3-phosphate and acetaldehyde from 2-deoxy-alpha-D-ribose 1-phosphate: step 2/2. Its function is as follows. Catalyzes a reversible aldol reaction between acetaldehyde and D-glyceraldehyde 3-phosphate to generate 2-deoxy-D-ribose 5-phosphate. In Caenorhabditis elegans, this protein is Putative deoxyribose-phosphate aldolase.